We begin with the raw amino-acid sequence, 275 residues long: Hydroxyethylthiazole kinase (275 aa).

A substrate-binding site is contributed by Met-50. ATP is bound by residues Arg-126 and Ser-171. Substrate is bound at residue Ala-200.

Belongs to the Thz kinase family. Requires Mg(2+) as cofactor.

The catalysed reaction is 5-(2-hydroxyethyl)-4-methylthiazole + ATP = 4-methyl-5-(2-phosphooxyethyl)-thiazole + ADP + H(+). It participates in cofactor biosynthesis; thiamine diphosphate biosynthesis; 4-methyl-5-(2-phosphoethyl)-thiazole from 5-(2-hydroxyethyl)-4-methylthiazole: step 1/1. Its function is as follows. Catalyzes the phosphorylation of the hydroxyl group of 4-methyl-5-beta-hydroxyethylthiazole (THZ). This Acinetobacter baumannii (strain SDF) protein is Hydroxyethylthiazole kinase.